Here is a 304-residue protein sequence, read N- to C-terminus: Ribosomal RNA small subunit methyltransferase H (304 aa).

Residues 37–39 (GGH), Asp57, Phe79, Asp100, and His107 contribute to the S-adenosyl-L-methionine site.

The protein belongs to the methyltransferase superfamily. RsmH family.

The protein resides in the cytoplasm. It carries out the reaction cytidine(1402) in 16S rRNA + S-adenosyl-L-methionine = N(4)-methylcytidine(1402) in 16S rRNA + S-adenosyl-L-homocysteine + H(+). Functionally, specifically methylates the N4 position of cytidine in position 1402 (C1402) of 16S rRNA. This Phocaeicola vulgatus (strain ATCC 8482 / DSM 1447 / JCM 5826 / CCUG 4940 / NBRC 14291 / NCTC 11154) (Bacteroides vulgatus) protein is Ribosomal RNA small subunit methyltransferase H.